The following is a 461-amino-acid chain: Cysteine--tRNA ligase (461 aa).

Residue cysteine 28 participates in Zn(2+) binding. A 'HIGH' region motif is present at residues isoleucine 30–histidine 40. Residues cysteine 209, histidine 234, and glutamate 238 each contribute to the Zn(2+) site. Positions lysine 266–serine 270 match the 'KMSKS' region motif. Residue lysine 269 participates in ATP binding.

Belongs to the class-I aminoacyl-tRNA synthetase family. In terms of assembly, monomer. Zn(2+) is required as a cofactor.

The protein resides in the cytoplasm. The catalysed reaction is tRNA(Cys) + L-cysteine + ATP = L-cysteinyl-tRNA(Cys) + AMP + diphosphate. The chain is Cysteine--tRNA ligase from Photorhabdus laumondii subsp. laumondii (strain DSM 15139 / CIP 105565 / TT01) (Photorhabdus luminescens subsp. laumondii).